A 236-amino-acid chain; its full sequence is Osmoprotectant import permease protein OsmY (236 aa).

Helical transmembrane passes span 9–29, 47–67, 95–115, 126–146, 180–200, and 207–227; these read VLGFTIVILLLLALFIWGIGL, LMLVFTSMFFALLVGIPSGIL, VLALAMVIIGIGDTPAIVALF, TYAGLCSVPASLIEAANGIGM, PLAFLIGASSYGELIFPGIYL, and ILGATATALFALILDTLLAWF. In terms of domain architecture, ABC transmembrane type-1 spans 43 to 224; it reads GQRHLMLVFT…LFALILDTLL (182 aa).

Belongs to the binding-protein-dependent transport system permease family. In terms of assembly, the complex is composed of two ATP-binding proteins (OsmV), two transmembrane proteins (OsmW and OsmY) and a solute-binding protein (OsmX).

It localises to the cell inner membrane. Part of the OsmU ABC transporter complex, which is involved in the uptake of osmoprotectants such as choline-O-sulfate and glycine betaine. Probably responsible for the translocation of the substrate across the membrane. The protein is Osmoprotectant import permease protein OsmY (osmY) of Salmonella typhimurium (strain LT2 / SGSC1412 / ATCC 700720).